We begin with the raw amino-acid sequence, 660 residues long: DNA ligase (660 aa).

Residues Asp31 to Asp35, Ser79 to Leu80, and Glu111 contribute to the NAD(+) site. The active-site N6-AMP-lysine intermediate is the Lys113. Arg134, Glu168, Lys280, and Lys304 together coordinate NAD(+). Residues Cys397, Cys400, Cys413, and Cys419 each contribute to the Zn(2+) site. The BRCT domain maps to Arg577 to Leu660.

It belongs to the NAD-dependent DNA ligase family. LigA subfamily. Mg(2+) is required as a cofactor. It depends on Mn(2+) as a cofactor.

The enzyme catalyses NAD(+) + (deoxyribonucleotide)n-3'-hydroxyl + 5'-phospho-(deoxyribonucleotide)m = (deoxyribonucleotide)n+m + AMP + beta-nicotinamide D-nucleotide.. DNA ligase that catalyzes the formation of phosphodiester linkages between 5'-phosphoryl and 3'-hydroxyl groups in double-stranded DNA using NAD as a coenzyme and as the energy source for the reaction. It is essential for DNA replication and repair of damaged DNA. The polypeptide is DNA ligase (Alkaliphilus metalliredigens (strain QYMF)).